We begin with the raw amino-acid sequence, 309 residues long: Sodium/potassium-transporting ATPase subunit beta-1 (309 aa).

Topologically, residues 1-45 (MSKNNGKGAKGEFEFPQPAKKQTFSEMIYNPQEGTFFGRTGKSWS) are cytoplasmic. Residues 46–66 (QLLLFYTIFYIVLAALFTICM) traverse the membrane as a helical; Signal-anchor for type II membrane protein segment. The Extracellular portion of the chain corresponds to 67–309 (QGLLSTISDT…GSVTFQILLD (243 aa)). Asn133 carries an N-linked (GlcNAc...) asparagine glycan. 2 disulfides stabilise this stretch: Cys143–Cys155 and Cys165–Cys179. The N-linked (GlcNAc...) asparagine glycan is linked to Asn211. Cys225 and Cys282 are joined by a disulfide.

This sequence belongs to the X(+)/potassium ATPases subunit beta family. The sodium/potassium-transporting ATPase is composed of a catalytic alpha subunit, an auxiliary non-catalytic beta subunit and an additional regulatory subunit. Interacts with nkain. In terms of tissue distribution, in embryos, it is expressed in the neurons of the CNS and PNS, in Garland cells and posterior spiracles. In adults, it is concentrated in the thorax and abdomen (muscle tissue, digestive system and Malpighian tubules) and weakly expressed in the head. Expression is diffuse in the nervous system.

It is found in the cell membrane. In terms of biological role, this is the non-catalytic component of the active enzyme, which catalyzes the hydrolysis of ATP coupled with the exchange of Na(+) and K(+) ions across the plasma membrane. The beta subunit regulates, through assembly of alpha/beta heterodimers, the number of sodium pumps transported to the plasma membrane. The polypeptide is Sodium/potassium-transporting ATPase subunit beta-1 (nrv1) (Drosophila melanogaster (Fruit fly)).